Consider the following 28-residue polypeptide: Conotoxin Cl6a (28 aa).

3 cysteine pairs are disulfide-bonded: Cys3-Cys13, Cys7-Cys19, and Cys12-Cys24.

In terms of tissue distribution, expressed by the venom duct.

It is found in the secreted. The chain is Conotoxin Cl6a from Californiconus californicus (California cone).